Here is an 869-residue protein sequence, read N- to C-terminus: Translation initiation factor IF-2 (869 aa).

2 disordered regions span residues 51-78 (KQHG…NMGK) and 105-277 (EEET…SDLK). The span at 67–76 (QRKTTSTLNM) shows a compositional bias: polar residues. The segment covering 110–119 (RALAEQQAQL) has biased composition (low complexity). The segment covering 120 to 241 (EAEKAAAEEA…KKQEAEEVHV (122 aa)) has biased composition (basic and acidic residues). Positions 369 to 542 (SRAPVVTIMG…ELLDLKAPPT (174 aa)) constitute a tr-type G domain. The G1 stretch occupies residues 378–385 (GHVDHGKT). 378–385 (GHVDHGKT) is a GTP binding site. The interval 403 to 407 (GITQH) is G2. The interval 424 to 427 (DTPG) is G3. GTP contacts are provided by residues 424–428 (DTPGH) and 478–481 (NKMD). Residues 478–481 (NKMD) are G4. Residues 514 to 516 (SAK) form a G5 region.

It belongs to the TRAFAC class translation factor GTPase superfamily. Classic translation factor GTPase family. IF-2 subfamily.

The protein localises to the cytoplasm. One of the essential components for the initiation of protein synthesis. Protects formylmethionyl-tRNA from spontaneous hydrolysis and promotes its binding to the 30S ribosomal subunits. Also involved in the hydrolysis of GTP during the formation of the 70S ribosomal complex. The polypeptide is Translation initiation factor IF-2 (Pseudoalteromonas atlantica (strain T6c / ATCC BAA-1087)).